A 559-amino-acid chain; its full sequence is Phosphoinositide 3-phosphatase (559 aa).

Residues 120 to 541 form the Myotubularin phosphatase domain; sequence SWKSFLLENE…SSLRWWSASF (422 aa). Cys342 acts as the Phosphocysteine intermediate in catalysis.

The protein belongs to the protein-tyrosine phosphatase family. Non-receptor class myotubularin subfamily.

The protein localises to the cytoplasm. It carries out the reaction a 1,2-diacyl-sn-glycero-3-phospho-(1D-myo-inositol-3-phosphate) + H2O = a 1,2-diacyl-sn-glycero-3-phospho-(1D-myo-inositol) + phosphate. Its function is as follows. Lipid phosphatase which dephosphorylates phosphatidylinositol 3-monophosphate (PI3P). Involved in the control of PI3P-dependent signaling and in the maintenance of endosomal system integrity. The polypeptide is Phosphoinositide 3-phosphatase (Schizosaccharomyces pombe (strain 972 / ATCC 24843) (Fission yeast)).